Here is a 385-residue protein sequence, read N- to C-terminus: Proteinase-activated receptor 4 (385 aa).

An N-terminal signal peptide occupies residues 1–17 (MWGRLLLWPLVLGFSLS). Residues 18 to 47 (GGTQTPSVYDESGSTGGGDDSTPSILPAPR) constitute a propeptide, removed for receptor activation. The tract at residues 21–42 (QTPSVYDESGSTGGGDDSTPSI) is disordered. At 48–82 (GYPGQVCANDSDTLELPDSSRALLLGWVPTRLVPA) the chain is on the extracellular side. Asparagine 56 carries an N-linked (GlcNAc...) asparagine glycan. The helical transmembrane segment at 83–103 (LYGLVLVVGLPANGLALWVLA) threads the bilayer. The Cytoplasmic portion of the chain corresponds to 104–108 (TQAPR). A helical membrane pass occupies residues 109–129 (LPSTMLLMNLAAADLLLALAL). Topologically, residues 130–151 (PPRIAYHLRGQRWPFGEAACRL) are extracellular. An intrachain disulfide couples cysteine 149 to cysteine 228. A helical membrane pass occupies residues 152 to 172 (ATAALYGHMYGSVLLLAAVSL). Topologically, residues 173–192 (DRYLALVHPLRARALRGRRL) are cytoplasmic. A helical membrane pass occupies residues 193-213 (ALGLCMAAWLMAAALALPLTL). Over 214 to 247 (QRQTFRLARSDRVLCHDALPLDAQASHWQPAFTC) the chain is Extracellular. A helical membrane pass occupies residues 248–268 (LALLGCFLPLLAMLLCYGATL). Residues 269 to 283 (HTLAASGRRYGHALR) are Cytoplasmic-facing. A helical membrane pass occupies residues 284 to 304 (LTAVVLASAVAFFVPSNLLLL). Topologically, residues 305-319 (LHYSDPSPSAWGNLY) are extracellular. A helical transmembrane segment spans residues 320 to 343 (GAYVPSLALSTLNSCVDPFIYYYV). The Cytoplasmic segment spans residues 344-385 (SAEFRDKVRAGLFQRSPGDTVASKASAEGGSRGMGTHSSLLQ). The disordered stretch occupies residues 362–385 (DTVASKASAEGGSRGMGTHSSLLQ).

It belongs to the G-protein coupled receptor 1 family. In terms of processing, a proteolytic cleavage generates a new N-terminus that functions as a tethered ligand. In terms of tissue distribution, widely expressed, with highest levels in lung, pancreas, thyroid, testis and small intestine. Not expressed in brain, kidney, spinal cord and peripheral blood leukocytes. Also detected in platelets.

The protein resides in the cell membrane. With respect to regulation, activated upon interaction by mucunain, a cowhage (Mucuna pruriens) plant cysteine proteinase. Functionally, receptor for activated thrombin or trypsin coupled to G proteins that stimulate phosphoinositide hydrolysis. May play a role in platelets activation. This is Proteinase-activated receptor 4 (F2RL3) from Homo sapiens (Human).